We begin with the raw amino-acid sequence, 631 residues long: MPPGRKQGAGCWTCRLRRKRCDSVQPVCGSCQSLEITCYSGEARPSWMDGGSDQKHMSESIKARIKHNAMLRRERRLMANEDHDIIMTMETDHRAPGELMNSGSALGASSSSRVSNPVLEYDSLADSSASTPSTSSGRPTTLRSSVDRFDEGQSPLTVASWASGPPTLSSGYSASSTRPAVPIQVQLGSAMIYLDYVFPFLFPFYQPSLIETGRQWLLGLLCQNDVSFHIASSLSAYFFSLVPQGDDQDMHDDCKALVWDKLIEQMDLAIGSIQSTVSAVSSSGARTPLLDKTRIMQEITQLLIVEVTVRNNVNWQIHLTPALSIFDEIFKSHGLDQSSKPSLNILSHALPSSIPVTTQHHKSLPNTADQSALTFFVSLLLFVDIMASASLGTSPTLQSYHESLLPSQSDQDFHISLEKVLGCQNWALVAIGNISALCAWKRDAKRGGNFSIFRLVSLAEPISQALERGLKDLDTSPPSPQPTKTSAGRLEAYYSRHDKAIDHKFTANITRIWAHAAIIYLSVSLSGWQTNNNEIRAAVAQVLALLEMIDSPGQLRSLSWPICIAGCLALPAQVPAFRRIVGTMGPLGKFGTLSNALSIMETVWNSRDSIDSNTWDIASALSIIGSPALLI.

Positions 11-38 (CWTCRLRRKRCDSVQPVCGSCQSLEITC) form a DNA-binding region, zn(2)-C6 fungal-type. Positions 123–144 (SLADSSASTPSTSSGRPTTLRS) are enriched in low complexity. Disordered regions lie at residues 123–148 (SLADSSASTPSTSSGRPTTLRSSVDR) and 469–488 (GLKDLDTSPPSPQPTKTSAG).

The protein resides in the nucleus. Transcription factor; part of the gene cluster that mediates the biosynthesis of pestalotiollide B which is part of dibenzodioxocinones, a novel class of inhibitors against cholesterol ester transfer protein (CEPT). Acts as the key transcription factor within the cluster and positively regulates the expression of the cluster genes and the subsequent production of dibenzodioxocinones such as pestalotiollide B, pestalotiollide C, 1',2'-dehydropenicillide, 3'-methoxy-1',2'-dehydropenicillide and 1',2'-epoxy-3',4'-didehydropenicillide. Required for the expression of most PKS genes outside of the dibenzodioxocinones cluster, (43 out of 48 defined PKS genes), and promotes pigmentation of the mycelium and conidia. The protein is Transcription factor dibT of Pestalotiopsis microspora.